The primary structure comprises 483 residues: Altronate oxidoreductase (483 aa).

An NAD(+)-binding site is contributed by 18–29 (IIQFGEGNFLRA).

The protein belongs to the mannitol dehydrogenase family. UxaB subfamily.

It carries out the reaction D-altronate + NAD(+) = keto-D-tagaturonate + NADH + H(+). The protein operates within carbohydrate metabolism; pentose and glucuronate interconversion. The polypeptide is Altronate oxidoreductase (Yersinia enterocolitica serotype O:8 / biotype 1B (strain NCTC 13174 / 8081)).